The primary structure comprises 328 residues: Phospholipid scramblase 1 (328 aa).

The tract at residues 1–93 is proline-rich domain (PRD); it reads MENHSKQTEA…NHPGGPGGTP (93 aa). The tract at residues 1–96 is disordered; that stretch reads MENHSKQTEA…GGPGGTPWMP (96 aa). Topologically, residues 1-297 are cytoplasmic; sequence MENHSKQTEA…IQFPLDLDVK (297 aa). The short motif at 18 to 26 is the SH3-binding 1 element; sequence PAGYPPPYP. The PPxY motif motif lies at 22-25; sequence PPPY. Residues 28–47 show a composition bias toward low complexity; it reads AAFQGPSDHAAYPIPQAGYQ. The segment covering 49 to 64 has biased composition (pro residues); sequence PPGPYPGPQPGYPVPP. An SH3-binding 2 motif is present at residues 56 to 64; sequence PQPGYPVPP. Tyr-83 is subject to Phosphotyrosine; by ABL. An SH3-binding 3 motif is present at residues 93–101; that stretch reads PWMPAPPPP. Residue Thr-170 is modified to Phosphothreonine; by PKC/PRKCD. 4 S-palmitoyl cysteine lipidation sites follow: Cys-193, Cys-194, Cys-197, and Cys-198. The Nuclear localization signal signature appears at 269-275; it reads SKQWSGF. The chain crosses the membrane as a helical span at residues 298 to 314; it reads MKAVMLGACFLIDFMFF. At 315 to 328 the chain is on the extracellular side; sequence ERTGNEEQRSGAWQ.

Belongs to the phospholipid scramblase family. Forms homooligomers in the presence of calcium. Interacts with ABL. Interacts with RELT, RELL1 and RELL2. Interacts with OXSR1 in the presence of RELT. Interacts with OCLN, TOP2A and TOP2B. Interacts with TRPC1, TRPC4 and TRPC5. Interacts with ILDR1. It depends on Ca(2+) as a cofactor. Requires Mg(2+) as cofactor. Zn(2+) serves as cofactor. Post-translationally, phosphorylation at Thr-170 by PKC/PKCD increases its phospholipid scramblase activity during both cell stimulation and apoptosis. Phosphorylated by OXSR1 in the presence of RELT. In terms of processing, palmitoylation is required for its phospholipid scramblase activity. Palmitoylation regulates its localization to the cell membrane or the nucleus; trafficking to the cell membrane is dependent upon palmitoylation whereas in the absence of palmitoylation, localizes to the nucleus. In terms of tissue distribution, highly expressed in kidney, lung, liver and bone marrow, slightly in spleen, heart and macrophage.

Its subcellular location is the cell membrane. The protein resides in the nucleus. It is found in the cytoplasm. It localises to the perinuclear region. It carries out the reaction a 1,2-diacyl-sn-glycero-3-phosphocholine(in) = a 1,2-diacyl-sn-glycero-3-phosphocholine(out). It catalyses the reaction a 1,2-diacyl-sn-glycero-3-phosphoethanolamine(in) = a 1,2-diacyl-sn-glycero-3-phosphoethanolamine(out). The enzyme catalyses a 1,2-diacyl-sn-glycero-3-phospho-L-serine(in) = a 1,2-diacyl-sn-glycero-3-phospho-L-serine(out). In terms of biological role, catalyzes calcium-induced ATP-independent rapid bidirectional and non-specific distribution of phospholipids (lipid scrambling or lipid flip-flop) between the inner and outer leaflet of the plasma membrane resulting in collapse of the phospholipid asymmetry which leads to phosphatidylserine externalization on the cell surface. Mediates calcium-dependent phosphatidylserine externalization and apoptosis in neurons via its association with TRPC5. Also exhibits magnesium-dependent nuclease activity against double-stranded DNA and RNA but not single-stranded DNA and can enhance DNA decatenation mediated by TOP2A. Negatively regulates FcR-mediated phagocytosis in differentiated macrophages. May contribute to cytokine-regulated cell proliferation and differentiation. In Mus musculus (Mouse), this protein is Phospholipid scramblase 1 (Plscr1).